Consider the following 113-residue polypeptide: Prefoldin subunit beta (113 aa).

This sequence belongs to the prefoldin subunit beta family. In terms of assembly, heterohexamer of two alpha and four beta subunits.

It is found in the cytoplasm. Functionally, molecular chaperone capable of stabilizing a range of proteins. Seems to fulfill an ATP-independent, HSP70-like function in archaeal de novo protein folding. In Methanococcus maripaludis (strain C6 / ATCC BAA-1332), this protein is Prefoldin subunit beta.